A 563-amino-acid chain; its full sequence is GTPase Obg (563 aa).

The region spanning 2 to 168 is the Obg domain; it reads SDFVDRVTVH…RDVILELKSI (167 aa). The OBG-type G domain occupies 169–349; sequence ADVALVGFPS…LNFALSALVH (181 aa). Residues 175 to 182, 200 to 204, 221 to 224, 301 to 304, and 330 to 332 each bind GTP; these read GFPSAGKS, FTTLV, DVPG, NKID, and STA. Residues Ser-182 and Thr-202 each coordinate Mg(2+). In terms of domain architecture, OCT spans 383-469; that stretch reads DEGGSALEFT…ARMVEFDWDP (87 aa). 2 disordered regions span residues 478-509 and 528-563; these read LDGS…ERRA and ERKA…ETEE. Residues 486–509 show a composition bias toward basic and acidic residues; it reads RGKDLRLEEQDPRTHRRSNAERRA.

The protein belongs to the TRAFAC class OBG-HflX-like GTPase superfamily. OBG GTPase family. As to quaternary structure, monomer. Requires Mg(2+) as cofactor.

It localises to the cytoplasm. In terms of biological role, an essential GTPase which binds GTP, GDP and possibly (p)ppGpp with moderate affinity, with high nucleotide exchange rates and a fairly low GTP hydrolysis rate. Plays a role in control of the cell cycle, stress response, ribosome biogenesis and in those bacteria that undergo differentiation, in morphogenesis control. The chain is GTPase Obg from Bifidobacterium longum subsp. infantis (strain ATCC 15697 / DSM 20088 / JCM 1222 / NCTC 11817 / S12).